The following is a 543-amino-acid chain: Probable bifunctional tRNA threonylcarbamoyladenosine biosynthesis protein (543 aa).

Residues 1 to 329 are kae1; that stretch reads MDISKDLICI…YRSDMVEVNW (329 aa). Fe cation-binding residues include H112, H116, and Y133. Residues 133-137, D165, G178, E182, and N262 each bind L-threonylcarbamoyladenylate; that span reads YVSGG. D290 contacts Fe cation. In terms of domain architecture, Protein kinase spans 342–543; that stretch reads IIPEHLIGKG…KEVEKRARYL (202 aa). ATP is bound by residues 348-356 and K369; that span reads IGKGAEADI. The active-site Proton acceptor; for kinase activity is the D461.

The protein in the N-terminal section; belongs to the KAE1 / TsaD family. This sequence in the C-terminal section; belongs to the protein kinase superfamily. Tyr protein kinase family. BUD32 subfamily. In terms of assembly, component of the KEOPS complex that consists of Kae1, Bud32, Cgi121 and Pcc1; the whole complex dimerizes. Fe(2+) is required as a cofactor.

The protein resides in the cytoplasm. It catalyses the reaction L-seryl-[protein] + ATP = O-phospho-L-seryl-[protein] + ADP + H(+). The enzyme catalyses L-threonyl-[protein] + ATP = O-phospho-L-threonyl-[protein] + ADP + H(+). The catalysed reaction is L-threonylcarbamoyladenylate + adenosine(37) in tRNA = N(6)-L-threonylcarbamoyladenosine(37) in tRNA + AMP + H(+). Functionally, required for the formation of a threonylcarbamoyl group on adenosine at position 37 (t(6)A37) in tRNAs that read codons beginning with adenine. Is a component of the KEOPS complex that is probably involved in the transfer of the threonylcarbamoyl moiety of threonylcarbamoyl-AMP (TC-AMP) to the N6 group of A37. The Kae1 domain likely plays a direct catalytic role in this reaction. The Bud32 domain probably displays kinase activity that regulates Kae1 function. The chain is Probable bifunctional tRNA threonylcarbamoyladenosine biosynthesis protein from Methanococcus maripaludis (strain C6 / ATCC BAA-1332).